A 28-amino-acid polypeptide reads, in one-letter code: Taicatoxin, alpha-neurotoxin-like component (28 aa).

A disulfide bridge links Cys3 with Cys21.

It belongs to the three-finger toxin family. Long-chain subfamily. Type II alpha-neurotoxin sub-subfamily. Heterotrimer composed of this alpha-neurotoxin-like peptide of 8 kDa, a neurotoxic phospholipase of 16 kDa (AC Q7LZG2) and a serine protease inhibitor of 7 kDa (AC B7S4N9) at an approximate stoichiometry of 1:1:4; non-covalently linked. In terms of tissue distribution, expressed by the venom gland.

The protein localises to the secreted. Functionally, the heterotrimer blocks the voltage-dependent L-type calcium channels (Cav1/CACNA1) from the heart, and the small conductance calcium-activated potassium channels (KCa2/KCNN) in the chromaffin cells and in the brain. Is very toxic to mice. The sequence is that of Taicatoxin, alpha-neurotoxin-like component from Oxyuranus scutellatus scutellatus (Australian taipan).